Here is a 465-residue protein sequence, read N- to C-terminus: Chromosomal replication initiator protein DnaA (465 aa).

Positions 1–87 are domain I, interacts with DnaA modulators; it reads MLWTDCLTRL…RPGSILSSSE (87 aa). A disordered region spans residues 81–123; that stretch reads SILSSSEQPATTTAALQTAPIPQPAKVKREPEPVANTAVSSKS. Residues 88–100 show a composition bias toward low complexity; it reads QPATTTAALQTAP. A domain II region spans residues 88–127; the sequence is QPATTTAALQTAPIPQPAKVKREPEPVANTAVSSKSSKKK. A domain III, AAA+ region region spans residues 128 to 345; sequence LLNPQFTFSL…GALNKVVAIS (218 aa). Residues G173, G175, K176, and T177 each coordinate ATP. The segment at 346–465 is domain IV, binds dsDNA; the sequence is RFKGAPIDLD…YKNLLRLLQS (120 aa).

The protein belongs to the DnaA family. As to quaternary structure, oligomerizes as a right-handed, spiral filament on DNA at oriC.

The protein resides in the cytoplasm. Functionally, plays an essential role in the initiation and regulation of chromosomal replication. ATP-DnaA binds to the origin of replication (oriC) to initiate formation of the DNA replication initiation complex once per cell cycle. Binds the DnaA box (a 9 base pair repeat at the origin) and separates the double-stranded (ds)DNA. Forms a right-handed helical filament on oriC DNA; dsDNA binds to the exterior of the filament while single-stranded (ss)DNA is stabiized in the filament's interior. The ATP-DnaA-oriC complex binds and stabilizes one strand of the AT-rich DNA unwinding element (DUE), permitting loading of DNA polymerase. After initiation quickly degrades to an ADP-DnaA complex that is not apt for DNA replication. Binds acidic phospholipids. This chain is Chromosomal replication initiator protein DnaA, found in Acinetobacter baumannii (strain AB307-0294).